The sequence spans 364 residues: tRNA-specific 2-thiouridylase MnmA 2 (364 aa).

ATP contacts are provided by residues 10-17 (GMSGGVDS) and Met36. Cys106 (nucleophile) is an active-site residue. Cys106 and Cys204 are oxidised to a cystine. Gly130 contributes to the ATP binding site. The interaction with tRNA stretch occupies residues 154–156 (KDQ). Cys204 acts as the Cysteine persulfide intermediate in catalysis. Residues 310–311 (RY) are interaction with tRNA.

It belongs to the MnmA/TRMU family.

The protein localises to the cytoplasm. The catalysed reaction is S-sulfanyl-L-cysteinyl-[protein] + uridine(34) in tRNA + AH2 + ATP = 2-thiouridine(34) in tRNA + L-cysteinyl-[protein] + A + AMP + diphosphate + H(+). In terms of biological role, catalyzes the 2-thiolation of uridine at the wobble position (U34) of tRNA, leading to the formation of s(2)U34. This Caldanaerobacter subterraneus subsp. tengcongensis (strain DSM 15242 / JCM 11007 / NBRC 100824 / MB4) (Thermoanaerobacter tengcongensis) protein is tRNA-specific 2-thiouridylase MnmA 2.